The following is a 445-amino-acid chain: SVP1-like protein 2 (445 aa).

2 WD repeats span residues 218 to 258 (AHKA…LLKE) and 263 to 302 (LDRA…EGTL). The interval 301-321 (TLNPANPEDHQSSGSNGHIKA) is disordered. A compositionally biased stretch (polar residues) spans 312-321 (SSGSNGHIKA).

This sequence belongs to the WD repeat PROPPIN family.

It is found in the vacuole membrane. Its subcellular location is the cytoplasmic vesicle membrane. Involved in mitochondrial or peroxisomal functions and amino acid signaling pathways. This chain is SVP1-like protein 2 (HSV2), found in Candida glabrata (strain ATCC 2001 / BCRC 20586 / JCM 3761 / NBRC 0622 / NRRL Y-65 / CBS 138) (Yeast).